A 161-amino-acid polypeptide reads, in one-letter code: MKIRIGHGFDVHKFGEVRPLILCGVEVPYETGLVAHSDGDVVLHAVSDAILGAMALGDIGKHFPDTDTAYKGADSRVLLRHCYDLAKQRGFELGNVDVTIIAQAPKIAPHIEAMRQVLATDLMAELDDINVKATTTEKLGFTGRKEGIAVEAVVLMSRKQD.

A divalent metal cation is bound by residues D10 and H12. 4-CDP-2-C-methyl-D-erythritol 2-phosphate is bound by residues 10 to 12 and 36 to 37; these read DVH and HS. Residue H44 participates in a divalent metal cation binding. Residues 58 to 60, 63 to 67, 134 to 137, F141, and R144 contribute to the 4-CDP-2-C-methyl-D-erythritol 2-phosphate site; these read DIG, FPDTD, and TTTE.

It belongs to the IspF family. Homotrimer. A divalent metal cation serves as cofactor.

It carries out the reaction 4-CDP-2-C-methyl-D-erythritol 2-phosphate = 2-C-methyl-D-erythritol 2,4-cyclic diphosphate + CMP. It functions in the pathway isoprenoid biosynthesis; isopentenyl diphosphate biosynthesis via DXP pathway; isopentenyl diphosphate from 1-deoxy-D-xylulose 5-phosphate: step 4/6. Functionally, involved in the biosynthesis of isopentenyl diphosphate (IPP) and dimethylallyl diphosphate (DMAPP), two major building blocks of isoprenoid compounds. Catalyzes the conversion of 4-diphosphocytidyl-2-C-methyl-D-erythritol 2-phosphate (CDP-ME2P) to 2-C-methyl-D-erythritol 2,4-cyclodiphosphate (ME-CPP) with a corresponding release of cytidine 5-monophosphate (CMP). The protein is 2-C-methyl-D-erythritol 2,4-cyclodiphosphate synthase of Shewanella putrefaciens (strain CN-32 / ATCC BAA-453).